Consider the following 277-residue polypeptide: Phosphate import ATP-binding protein PstB (277 aa).

Positions 31–272 (IEVPGLSLFY…PAKKQTEDYI (242 aa)) constitute an ABC transporter domain. 63–70 (GPSGCGKS) lines the ATP pocket.

This sequence belongs to the ABC transporter superfamily. Phosphate importer (TC 3.A.1.7) family. The complex is composed of two ATP-binding proteins (PstB), two transmembrane proteins (PstC and PstA) and a solute-binding protein (PstS).

Its subcellular location is the cell inner membrane. It carries out the reaction phosphate(out) + ATP + H2O = ADP + 2 phosphate(in) + H(+). Its function is as follows. Part of the ABC transporter complex PstSACB involved in phosphate import. Responsible for energy coupling to the transport system. The protein is Phosphate import ATP-binding protein PstB of Pseudomonas fluorescens (strain Pf0-1).